Reading from the N-terminus, the 201-residue chain is Translation initiation factor IF-3 (201 aa).

The protein belongs to the IF-3 family. Monomer.

The protein localises to the cytoplasm. In terms of biological role, IF-3 binds to the 30S ribosomal subunit and shifts the equilibrium between 70S ribosomes and their 50S and 30S subunits in favor of the free subunits, thus enhancing the availability of 30S subunits on which protein synthesis initiation begins. In Mycoplasma pneumoniae (strain ATCC 29342 / M129 / Subtype 1) (Mycoplasmoides pneumoniae), this protein is Translation initiation factor IF-3.